The primary structure comprises 291 residues: MFKGSMVAIVTPFKKGKIDEKAFEKLIEWHIKEGTHGIVPCGTTGEASTLDYEEHYKVIEITVKVVNKRIPVIAGTGSNSTDEAIMITKKAEKLGADAALLVTPYYNKPTQEGLYRHYKEIADKTGIPLILYNVPGRTSVNILPQTVARLAEHPRIVGIKEATGDMKQVSELIRLCGDKITVLSGDDFTNLTLLALGGKGAISVTANICPKDMAELFNAWEKGDIEHARKLHYKLEPLNKAMFIETNPIPVKTALAMMGKIKEEFRLPLCEMSQTNKEKLAEVLRSAGLIK.

Residue Thr-44 coordinates pyruvate. Catalysis depends on Tyr-132, which acts as the Proton donor/acceptor. The active-site Schiff-base intermediate with substrate is Lys-160. Ile-202 provides a ligand contact to pyruvate.

It belongs to the DapA family. In terms of assembly, homotetramer; dimer of dimers.

It is found in the cytoplasm. The catalysed reaction is L-aspartate 4-semialdehyde + pyruvate = (2S,4S)-4-hydroxy-2,3,4,5-tetrahydrodipicolinate + H2O + H(+). Its pathway is amino-acid biosynthesis; L-lysine biosynthesis via DAP pathway; (S)-tetrahydrodipicolinate from L-aspartate: step 3/4. Catalyzes the condensation of (S)-aspartate-beta-semialdehyde [(S)-ASA] and pyruvate to 4-hydroxy-tetrahydrodipicolinate (HTPA). The chain is 4-hydroxy-tetrahydrodipicolinate synthase from Thermodesulfovibrio yellowstonii (strain ATCC 51303 / DSM 11347 / YP87).